We begin with the raw amino-acid sequence, 290 residues long: Dihydroorotate dehydrogenase B (NAD(+)), catalytic subunit (290 aa).

FMN contacts are provided by residues S17 and 42 to 43 (KT). Residues K42, 67–71 (NAIGL), and N117 each bind substrate. N117 lines the FMN pocket. The Nucleophile role is filled by S120. The FMN site is built by K152 and I177. 178–179 (NT) serves as a coordination point for substrate. FMN contacts are provided by residues G203, 229 to 230 (GG), and 251 to 252 (GT).

Belongs to the dihydroorotate dehydrogenase family. Type 1 subfamily. As to quaternary structure, heterotetramer of 2 PyrK and 2 PyrD type B subunits. Requires FMN as cofactor.

The protein resides in the cytoplasm. It catalyses the reaction (S)-dihydroorotate + NAD(+) = orotate + NADH + H(+). Its pathway is pyrimidine metabolism; UMP biosynthesis via de novo pathway; orotate from (S)-dihydroorotate (NAD(+) route): step 1/1. In terms of biological role, catalyzes the conversion of dihydroorotate to orotate with NAD(+) as electron acceptor. This chain is Dihydroorotate dehydrogenase B (NAD(+)), catalytic subunit (pyrD), found in Saccharolobus solfataricus (strain ATCC 35092 / DSM 1617 / JCM 11322 / P2) (Sulfolobus solfataricus).